The chain runs to 416 residues: MDLTVLGKAAKAASFQLATASTAQKNQALASMADQLEAQSASILAANAKDIALGREAGLSDAMLDRLLLNESRLQAIANDVRNVIKLNDPVGSEIDSRVLENGMSLARRRVPLGVVGVIYEARPNVTIDIAALCLKTGNAAILRGGKETFFSNMELVKVIQSALDKAGLPAASVQYIEKPDRELVTQLLKMDDYVDMIIPRGGAGLHKMCKENSTVPVIIGGFGISHIFVDESADLDKSVAVIENAKVQRPSACNALDTLLVHQAIAKPLLDKLIAKLNGKVAFVAEPKAKALMSSAAELRDAQAGDFDTEWLSYTLGVKVVQDVQEAIEHMREHNASHSDAIMTNDLYNAELFVNTAGSAAVYVNASTRFTDGAQFGLGAEVAVSTQKLHARGPMGLEELTSYKWVGKANYLSRS.

The protein belongs to the gamma-glutamyl phosphate reductase family.

It localises to the cytoplasm. The enzyme catalyses L-glutamate 5-semialdehyde + phosphate + NADP(+) = L-glutamyl 5-phosphate + NADPH + H(+). The protein operates within amino-acid biosynthesis; L-proline biosynthesis; L-glutamate 5-semialdehyde from L-glutamate: step 2/2. In terms of biological role, catalyzes the NADPH-dependent reduction of L-glutamate 5-phosphate into L-glutamate 5-semialdehyde and phosphate. The product spontaneously undergoes cyclization to form 1-pyrroline-5-carboxylate. This Vibrio cholerae serotype O1 (strain ATCC 39541 / Classical Ogawa 395 / O395) protein is Gamma-glutamyl phosphate reductase.